The following is a 198-amino-acid chain: Na(+)-translocating NADH-quinone reductase subunit E (198 aa).

Transmembrane regions (helical) follow at residues 11–31 (AVFI…FLAV), 35–55 (VSTA…AVPV), 77–97 (FLNF…LEMV), 110–130 (GIFL…SFMV), 140–160 (IVYG…LAGL), and 176–196 (LGIT…FSGI).

The protein belongs to the NqrDE/RnfAE family. In terms of assembly, composed of six subunits; NqrA, NqrB, NqrC, NqrD, NqrE and NqrF.

The protein resides in the cell inner membrane. The enzyme catalyses a ubiquinone + n Na(+)(in) + NADH + H(+) = a ubiquinol + n Na(+)(out) + NAD(+). NQR complex catalyzes the reduction of ubiquinone-1 to ubiquinol by two successive reactions, coupled with the transport of Na(+) ions from the cytoplasm to the periplasm. NqrA to NqrE are probably involved in the second step, the conversion of ubisemiquinone to ubiquinol. This is Na(+)-translocating NADH-quinone reductase subunit E from Haemophilus influenzae (strain 86-028NP).